Consider the following 306-residue polypeptide: Probable rRNA-processing protein EBP2 (306 aa).

M1 is modified (N-acetylmethionine). Disordered regions lie at residues 1-20 (MDTP…LASD), 75-103 (GPVP…DDFQ), and 150-169 (IRQK…KAKQ). Phosphothreonine is present on T3. Residues S7, S9, S11, and S13 each carry the phosphoserine modification. The segment covering 81-90 (SETQPTPQNQ) has biased composition (polar residues). Residues 91-103 (DQKKGVNPEDDFQ) show a composition bias toward basic and acidic residues. K93 participates in a covalent cross-link: Glycyl lysine isopeptide (Lys-Gly) (interchain with G-Cter in SUMO2). Positions 135-171 (DYFAEMAKSDQQMQKIRQKLQTKQAAMEKSEKAKQLR) form a coiled coil. Glycyl lysine isopeptide (Lys-Gly) (interchain with G-Cter in SUMO2) cross-links involve residues K179 and K218. Basic and acidic residues predominate over residues 213-224 (LEGDQKPVERSA). Residues 213-306 (LEGDQKPVER…ARQKLKSKAR (94 aa)) are disordered. Phosphoserine is present on residues S264 and S270. Basic residues predominate over residues 274-306 (KVAHGKGSRRPGKKGANKRPGKRARQKLKSKAR).

Belongs to the EBP2 family. In terms of assembly, interacts with WDR46.

Its subcellular location is the nucleus. It localises to the nucleolus. Required for the processing of the 27S pre-rRNA. The protein is Probable rRNA-processing protein EBP2 (Ebna1bp2) of Mus musculus (Mouse).